The primary structure comprises 132 residues: Transmembrane protein C1orf162 homolog (132 aa).

A helical membrane pass occupies residues 36–56 (IILAFFAGVLLTLLIVALIFL). The segment at 95-132 (TFKPPEENSNDLTRNHSSGLEPTIYSQIKVTDSDLPLP) is disordered. The segment covering 104–124 (NDLTRNHSSGLEPTIYSQIKV) has biased composition (polar residues). At Ser-111 the chain carries Phosphoserine.

It localises to the membrane. This Mus musculus (Mouse) protein is Transmembrane protein C1orf162 homolog.